Consider the following 178-residue polypeptide: Nucleolar protein 16 (178 aa).

A disordered region spans residues 1–31; sequence MPKAKGKTRRQKFGYSVNRKRLNRNARRKAA. Thr8 bears the Phosphothreonine mark. The residue at position 16 (Ser16) is a Phosphoserine. A Glycyl lysine isopeptide (Lys-Gly) (interchain with G-Cter in SUMO2) cross-link involves residue Lys74. Residue Lys90 is modified to N6-acetyllysine. The residue at position 144 (Thr144) is a Phosphothreonine. Glycyl lysine isopeptide (Lys-Gly) (interchain with G-Cter in SUMO2) cross-links involve residues Phe166, Leu167, Lys172, and Arg173.

It belongs to the NOP16 family.

It is found in the nucleus. The protein localises to the nucleolus. This Homo sapiens (Human) protein is Nucleolar protein 16 (NOP16).